We begin with the raw amino-acid sequence, 388 residues long: MQRITVLGATGTIGVNTLDVIARHPERFSVFALTGHRQVDRLAGQCRQFRPQVAVVADAAAAGELARQLSGMNVEILHGEAALVAVAASGSVDAVMSAIVGAAGLAPTMAAVRAGKQVYLANKESLVVAGRLMMEAVAASGSRLLPIDSEHNAIFQSLPADFSGDLDASGVERIVLTASGGPFRGWSAQQLAHVTPEQAVAHPNWVMGRKISVDSASLMNKGLEVIEARWLFNAPPGRIEVIVHPQSVIHSMVRYRDGSVVAQLGVPDMRTPIAHALAWPERMDAGVPALDFSLLGGLTFEKPDQEHFPCLGLAFDALREGGDQPAVLNAANEVAVAAFLEKRLAFMDIPRLVQKAMHQFAGRVSNSIEELLELDAEVRRHLLCSLAN.

NADPH is bound by residues threonine 10, glycine 11, threonine 12, isoleucine 13, arginine 37, glutamine 38, and asparagine 122. Lysine 123 contacts 1-deoxy-D-xylulose 5-phosphate. Glutamate 124 is a binding site for NADPH. Aspartate 148 is a binding site for Mn(2+). 1-deoxy-D-xylulose 5-phosphate is bound by residues serine 149, glutamate 150, serine 179, and histidine 202. Residue glutamate 150 participates in Mn(2+) binding. Residue glycine 208 participates in NADPH binding. The 1-deoxy-D-xylulose 5-phosphate site is built by serine 215, asparagine 220, lysine 221, and glutamate 224. Glutamate 224 provides a ligand contact to Mn(2+).

The protein belongs to the DXR family. Mg(2+) serves as cofactor. Requires Mn(2+) as cofactor.

It catalyses the reaction 2-C-methyl-D-erythritol 4-phosphate + NADP(+) = 1-deoxy-D-xylulose 5-phosphate + NADPH + H(+). It participates in isoprenoid biosynthesis; isopentenyl diphosphate biosynthesis via DXP pathway; isopentenyl diphosphate from 1-deoxy-D-xylulose 5-phosphate: step 1/6. Catalyzes the NADPH-dependent rearrangement and reduction of 1-deoxy-D-xylulose-5-phosphate (DXP) to 2-C-methyl-D-erythritol 4-phosphate (MEP). In Laribacter hongkongensis (strain HLHK9), this protein is 1-deoxy-D-xylulose 5-phosphate reductoisomerase.